The primary structure comprises 101 residues: Small ribosomal subunit protein uS14A (101 aa).

Belongs to the universal ribosomal protein uS14 family. In terms of assembly, part of the 30S ribosomal subunit. Contacts proteins S3 and S10.

Binds 16S rRNA, required for the assembly of 30S particles and may also be responsible for determining the conformation of the 16S rRNA at the A site. The chain is Small ribosomal subunit protein uS14A from Salinispora tropica (strain ATCC BAA-916 / DSM 44818 / JCM 13857 / NBRC 105044 / CNB-440).